The following is a 386-amino-acid chain: Mannitol-1-phosphate 5-dehydrogenase (386 aa).

6–17 (AIHFGGGNIGRG) is an NAD(+) binding site. The active site involves Lys214.

Belongs to the mannitol dehydrogenase family. In terms of assembly, monomer.

The enzyme catalyses D-mannitol 1-phosphate + NAD(+) = beta-D-fructose 6-phosphate + NADH + H(+). In terms of biological role, catalyzes the NAD(H)-dependent interconversion of D-fructose 6-phosphate and D-mannitol 1-phosphate in the mannitol metabolic pathway. Plays a key role in liamocins biosynthesis by providing the mannitol moity that is linked to 3,5-dihydroxydecanoic acid (provided by the HR-PKS PKS1) via ester bond formation catalyzed by the esterase EST1. The sequence is that of Mannitol-1-phosphate 5-dehydrogenase from Aureobasidium melanogenum (Aureobasidium pullulans var. melanogenum).